The chain runs to 314 residues: Coiled-coil domain-containing protein 92 (314 aa).

Coiled coils occupy residues 1–27 (MAAT…HAST) and 59–113 (DSSS…EKKY). Disordered regions lie at residues 153-193 (LSSS…KKSL) and 251-314 (ASDR…DRTV). The span at 176–186 (PPKDKLPETPR) shows a compositional bias: basic and acidic residues. Residue Ser-192 is modified to Phosphoserine. Basic residues predominate over residues 266-280 (KPHKTHVGVAHRIHH).

In terms of assembly, interacts with CEP164. Post-translationally, phosphorylated at Ser-192 by TTBK2.

Its subcellular location is the cytoplasm. The protein localises to the cytoskeleton. It is found in the microtubule organizing center. The protein resides in the centrosome. It localises to the centriole. Functionally, interferon-stimulated protein that plays a role in innate immunity. This is Coiled-coil domain-containing protein 92 (Ccdc92) from Mus musculus (Mouse).